Here is a 482-residue protein sequence, read N- to C-terminus: Probable cytochrome P450 508D1 (482 aa).

A helical transmembrane segment spans residues 1-21 (MVYLKNILIFLIIFLINPLVK). C428 is a binding site for heme.

Belongs to the cytochrome P450 family. It depends on heme as a cofactor.

The protein resides in the membrane. This is Probable cytochrome P450 508D1 (cyp508D1) from Dictyostelium discoideum (Social amoeba).